The primary structure comprises 281 residues: Bidirectional sugar transporter SWEET14 (281 aa).

The Extracellular portion of the chain corresponds to Met-1–Asn-6. A helical transmembrane segment spans residues Val-7–Pro-27. Positions Thr-11–Lys-97 constitute a MtN3/slv 1 domain. The Cytoplasmic portion of the chain corresponds to Val-28 to Gly-42. A helical transmembrane segment spans residues Phe-43–Leu-63. Topologically, residues Gln-64–Phe-70 are extracellular. Residues Leu-71–Ile-91 traverse the membrane as a helical segment. Over Thr-92–Lys-104 the chain is Cytoplasmic. A helical membrane pass occupies residues Val-105–Thr-125. Residues Lys-126–Lys-132 are Extracellular-facing. The helical transmembrane segment at Val-133–Met-153 threads the bilayer. Positions Val-133–Tyr-216 constitute a MtN3/slv 2 domain. The Cytoplasmic segment spans residues Arg-154–Pro-166. The helical transmembrane segment at Phe-167 to Ile-187 threads the bilayer. Over Lys-188–Val-192 the chain is Extracellular. A helical transmembrane segment spans residues Ala-193–Phe-213. Over Lys-214–Asn-281 the chain is Cytoplasmic. Residues Thr-244–Asp-259 are compositionally biased toward polar residues. Positions Thr-244–Asn-281 are disordered. The segment covering His-267 to Asn-281 has biased composition (basic and acidic residues).

This sequence belongs to the SWEET sugar transporter family. As to quaternary structure, forms homooligomers and/or heterooligomers.

It is found in the cell membrane. Functionally, mediates both low-affinity uptake and efflux of sugar across the plasma membrane. The sequence is that of Bidirectional sugar transporter SWEET14 from Arabidopsis thaliana (Mouse-ear cress).